The sequence spans 244 residues: Probable transcriptional regulatory protein CBU_1566 (244 aa).

This sequence belongs to the TACO1 family.

It localises to the cytoplasm. The protein is Probable transcriptional regulatory protein CBU_1566 of Coxiella burnetii (strain RSA 493 / Nine Mile phase I).